The primary structure comprises 297 residues: tRNA dimethylallyltransferase (297 aa).

10–17 (GITASGKS) is a binding site for ATP. 12 to 17 (TASGKS) is a binding site for substrate. The segment at 36-39 (DSKQ) is interaction with substrate tRNA.

This sequence belongs to the IPP transferase family. As to quaternary structure, monomer. Mg(2+) is required as a cofactor.

It carries out the reaction adenosine(37) in tRNA + dimethylallyl diphosphate = N(6)-dimethylallyladenosine(37) in tRNA + diphosphate. Its function is as follows. Catalyzes the transfer of a dimethylallyl group onto the adenine at position 37 in tRNAs that read codons beginning with uridine, leading to the formation of N6-(dimethylallyl)adenosine (i(6)A). The sequence is that of tRNA dimethylallyltransferase from Wolbachia pipientis wMel.